A 337-amino-acid chain; its full sequence is Glyceraldehyde-3-phosphate dehydrogenase 2, cytosolic (337 aa).

The tract at residues 1–151 is binding to NAD; that stretch reads MGKIKIGING…YTSDVNIVSN (151 aa). NAD(+)-binding positions include 13–14, D35, and R82; that span reads RI. Residues 152–337 form a catalytic region; it reads ASCTTNCLAP…DLIRHMFKTQ (186 aa). Residues 153–155, T184, 213–214, and R236 contribute to the D-glyceraldehyde 3-phosphate site; these read SCT and TG. The Nucleophile role is filled by C154. An NAD(+)-binding site is contributed by N318.

This sequence belongs to the glyceraldehyde-3-phosphate dehydrogenase family. As to quaternary structure, homotetramer. As to expression, developing seeds, seedling roots and shoots, and embryo.

Its subcellular location is the cytoplasm. The enzyme catalyses D-glyceraldehyde 3-phosphate + phosphate + NAD(+) = (2R)-3-phospho-glyceroyl phosphate + NADH + H(+). It participates in carbohydrate degradation; glycolysis; pyruvate from D-glyceraldehyde 3-phosphate: step 1/5. Functionally, key enzyme in glycolysis that catalyzes the first step of the pathway by converting D-glyceraldehyde 3-phosphate (G3P) into 3-phospho-D-glyceroyl phosphate. Essential for the maintenance of cellular ATP levels and carbohydrate metabolism. The polypeptide is Glyceraldehyde-3-phosphate dehydrogenase 2, cytosolic (GAPC2) (Zea mays (Maize)).